Here is a 178-residue protein sequence, read N- to C-terminus: Interleukin-10 (178 aa).

The first 18 residues, 1–18 (MPNPVLLYCLVLLAGMGT), serve as a signal peptide directing secretion. 2 cysteine pairs are disulfide-bonded: Cys30–Cys126 and Cys80–Cys132. N-linked (GlcNAc...) asparagine glycosylation occurs at Asn134.

It belongs to the IL-10 family. Homodimer. Interacts with IL10RA and IL10RB.

Its subcellular location is the secreted. Major immune regulatory cytokine that acts on many cells of the immune system where it has profound anti-inflammatory functions, limiting excessive tissue disruption caused by inflammation. Mechanistically, IL10 binds to its heterotetrameric receptor comprising IL10RA and IL10RB leading to JAK1 and STAT2-mediated phosphorylation of STAT3. In turn, STAT3 translocates to the nucleus where it drives expression of anti-inflammatory mediators. Targets antigen-presenting cells (APCs) such as macrophages and monocytes and inhibits their release of pro-inflammatory cytokines including granulocyte-macrophage colony-stimulating factor /GM-CSF, granulocyte colony-stimulating factor/G-CSF, IL-1 alpha, IL-1 beta, IL-6, IL-8 and TNF-alpha. Also interferes with antigen presentation by reducing the expression of MHC-class II and co-stimulatory molecules, thereby inhibiting their ability to induce T cell activation. In addition, controls the inflammatory response of macrophages by reprogramming essential metabolic pathways including mTOR signaling. This is Interleukin-10 (IL10) from Marmota monax (Woodchuck).